A 236-amino-acid chain; its full sequence is Hydroxyacylglutathione hydrolase (236 aa).

Histidine 52, histidine 54, aspartate 56, histidine 57, histidine 108, aspartate 125, and histidine 163 together coordinate Zn(2+).

It belongs to the metallo-beta-lactamase superfamily. Glyoxalase II family. Monomer. The cofactor is Zn(2+).

The catalysed reaction is an S-(2-hydroxyacyl)glutathione + H2O = a 2-hydroxy carboxylate + glutathione + H(+). It participates in secondary metabolite metabolism; methylglyoxal degradation; (R)-lactate from methylglyoxal: step 2/2. Thiolesterase that catalyzes the hydrolysis of S-D-lactoyl-glutathione to form glutathione and D-lactic acid. The chain is Hydroxyacylglutathione hydrolase from Mannheimia succiniciproducens (strain KCTC 0769BP / MBEL55E).